The following is a 137-amino-acid chain: Nucleoside diphosphate kinase (137 aa).

Lys-9, Phe-57, Arg-85, Thr-91, Arg-102, and Asn-112 together coordinate ATP. Catalysis depends on His-115, which acts as the Pros-phosphohistidine intermediate.

It belongs to the NDK family. As to quaternary structure, homotetramer. The cofactor is Mg(2+).

It localises to the cytoplasm. The catalysed reaction is a 2'-deoxyribonucleoside 5'-diphosphate + ATP = a 2'-deoxyribonucleoside 5'-triphosphate + ADP. It carries out the reaction a ribonucleoside 5'-diphosphate + ATP = a ribonucleoside 5'-triphosphate + ADP. Functionally, major role in the synthesis of nucleoside triphosphates other than ATP. The ATP gamma phosphate is transferred to the NDP beta phosphate via a ping-pong mechanism, using a phosphorylated active-site intermediate. The protein is Nucleoside diphosphate kinase of Citrifermentans bemidjiense (strain ATCC BAA-1014 / DSM 16622 / JCM 12645 / Bem) (Geobacter bemidjiensis).